We begin with the raw amino-acid sequence, 437 residues long: Glycogen synthase (437 aa).

Residue lysine 15 coordinates ADP-alpha-D-glucose.

It belongs to the glycosyltransferase 1 family. Bacterial/plant glycogen synthase subfamily.

The catalysed reaction is [(1-&gt;4)-alpha-D-glucosyl](n) + ADP-alpha-D-glucose = [(1-&gt;4)-alpha-D-glucosyl](n+1) + ADP + H(+). The protein operates within glycan biosynthesis; glycogen biosynthesis. Functionally, synthesizes alpha-1,4-glucan chains using ADP-glucose. This chain is Glycogen synthase, found in Thermus thermophilus (strain ATCC 27634 / DSM 579 / HB8).